A 101-amino-acid chain; its full sequence is Small ribosomal subunit protein uS17 (101 aa).

Belongs to the universal ribosomal protein uS17 family. Part of the 30S ribosomal subunit.

Its function is as follows. One of the primary rRNA binding proteins, it binds specifically to the 5'-end of 16S ribosomal RNA. This chain is Small ribosomal subunit protein uS17, found in Leifsonia xyli subsp. xyli (strain CTCB07).